The primary structure comprises 483 residues: Regulatory protein ViaA (483 aa).

This sequence belongs to the ViaA family. In terms of assembly, homodimer. Interacts with RavA.

It is found in the cytoplasm. Its function is as follows. Component of the RavA-ViaA chaperone complex, which may act on the membrane to optimize the function of some of the respiratory chains. ViaA stimulates the ATPase activity of RavA. This is Regulatory protein ViaA from Salmonella arizonae (strain ATCC BAA-731 / CDC346-86 / RSK2980).